Consider the following 400-residue polypeptide: Phosphoglycerate kinase (400 aa).

Residues 19-21 (DLN), Arg-38, 61-64 (HLGR), Arg-124, and Arg-161 contribute to the substrate site. ATP is bound by residues Lys-211, Gly-299, Glu-330, and 356-359 (GGDS).

Belongs to the phosphoglycerate kinase family. Monomer.

The protein localises to the cytoplasm. It carries out the reaction (2R)-3-phosphoglycerate + ATP = (2R)-3-phospho-glyceroyl phosphate + ADP. It functions in the pathway carbohydrate degradation; glycolysis; pyruvate from D-glyceraldehyde 3-phosphate: step 2/5. The chain is Phosphoglycerate kinase from Frankia casuarinae (strain DSM 45818 / CECT 9043 / HFP020203 / CcI3).